The following is a 237-amino-acid chain: Protein GrpE (237 aa).

2 disordered regions span residues 1 to 52 (MSGD…RLQQ) and 200 to 237 (KVSM…EPGV). The segment covering 27-40 (ASMNSDEGQPSAQS) has biased composition (polar residues). Low complexity predominate over residues 204–218 (GPGPQSGASPSSAQS).

The protein belongs to the GrpE family. As to quaternary structure, homodimer.

The protein resides in the cytoplasm. Its function is as follows. Participates actively in the response to hyperosmotic and heat shock by preventing the aggregation of stress-denatured proteins, in association with DnaK and GrpE. It is the nucleotide exchange factor for DnaK and may function as a thermosensor. Unfolded proteins bind initially to DnaJ; upon interaction with the DnaJ-bound protein, DnaK hydrolyzes its bound ATP, resulting in the formation of a stable complex. GrpE releases ADP from DnaK; ATP binding to DnaK triggers the release of the substrate protein, thus completing the reaction cycle. Several rounds of ATP-dependent interactions between DnaJ, DnaK and GrpE are required for fully efficient folding. The sequence is that of Protein GrpE from Prochlorococcus marinus (strain MIT 9303).